The primary structure comprises 48 residues: MPQLIPFFFLNQLFYGYLALFALLVLVSWVILPYLLQLQIVRLLITKL.

Position 1 is an N-formylmethionine (Met-1). Residues 1–12 (MPQLIPFFFLNQ) lie on the Mitochondrial intermembrane side of the membrane. Residues 13 to 33 (LFYGYLALFALLVLVSWVILP) form a helical membrane-spanning segment. At 34–48 (YLLQLQIVRLLITKL) the chain is on the mitochondrial matrix side.

In terms of assembly, F-type ATP synthases have 2 components, the catalytic core F(1) and the membrane-embedded component F(0), linked together by a central stalk and a peripheral stalk. The central stalk, also called rotor shaft, is often seen as part of F(1). The peripheral stalk is seen as part of F(0). F(0) contains the membrane channel next to the rotor. F-type ATP synthases form dimers but each monomer functions independently in ATP generation. The dimer consists of 18 different polypeptides: ATP1 (subunit alpha, part of F(1), 3 molecules per monomer), ATP2 (subunit beta, part of F(1), 3 molecules per monomer), ATP3 (subunit gamma, part of the central stalk), ATP4 (subunit b, part of the peripheral stalk), ATP5/OSCP (subunit 5/OSCP, part of the peripheral stalk), ATP6 (subunit a, part of the peripheral stalk), ATP7 (subunit d, part of the peripheral stalk), ATP8 (subunit 8, part of the peripheral stalk), OLI1 (subunit c, part of the rotor, 10 molecules per monomer), ATP14 (subunit h, part of the peripheral stalk), ATP15 (subunit epsilon, part of the central stalk), ATP16 (subunit delta, part of the central stalk), ATP17 (subunit f, part of the peripheral stalk), ATP18 (subunit i/j, part of the peripheral stalk). Dimer-specific subunits are ATP19 (subunit k, at interface between monomers), ATP20 (subunit g, at interface between monomers), TIM11 (subunit e, at interface between monomers). Also contains subunit L.

The protein localises to the mitochondrion inner membrane. Mitochondrial membrane ATP synthase (F(1)F(0) ATP synthase or Complex V) produces ATP from ADP in the presence of a proton gradient across the membrane which is generated by electron transport complexes of the respiratory chain. F-type ATP synthases consist of two structural domains, F(1) - containing the extramembraneous catalytic core, and F(0) - containing the membrane proton channel, linked together by a central stalk and a peripheral stalk. During catalysis, ATP synthesis in the catalytic domain of F(1) is coupled via a rotary mechanism of the central stalk subunits to proton translocation. Part of the complex F(0) domain. Minor subunit located with subunit a/ATP6 in the membrane. In Pichia angusta (Yeast), this protein is ATP synthase protein 8.